Consider the following 84-residue polypeptide: Small ribosomal subunit protein uS15 (84 aa).

The protein belongs to the universal ribosomal protein uS15 family. In terms of assembly, part of the 30S ribosomal subunit. Forms a bridge to the 50S subunit in the 70S ribosome, contacting the 23S rRNA.

Its function is as follows. One of the primary rRNA binding proteins, it binds directly to 16S rRNA where it helps nucleate assembly of the platform of the 30S subunit by binding and bridging several RNA helices of the 16S rRNA. In terms of biological role, forms an intersubunit bridge (bridge B4) with the 23S rRNA of the 50S subunit in the ribosome. In Akkermansia muciniphila (strain ATCC BAA-835 / DSM 22959 / JCM 33894 / BCRC 81048 / CCUG 64013 / CIP 107961 / Muc), this protein is Small ribosomal subunit protein uS15.